The sequence spans 146 residues: Hemoglobin subunit beta (146 aa).

In terms of domain architecture, Globin spans 2–146; the sequence is HWSAEEKQLI…VAHALARKYH (145 aa). 2 residues coordinate heme b: His63 and His92.

It belongs to the globin family. Heterotetramer of two alpha chains and two beta chains. In terms of tissue distribution, red blood cells.

Involved in oxygen transport from the lung to the various peripheral tissues. The protein is Hemoglobin subunit beta (HBB) of Columba livia (Rock dove).